Reading from the N-terminus, the 312-residue chain is Ribonuclease Z (312 aa).

Positions 62, 64, 66, 67, 144, 215, and 273 each coordinate Zn(2+). Asp66 (proton acceptor) is an active-site residue.

Belongs to the RNase Z family. As to quaternary structure, homodimer. Zn(2+) is required as a cofactor.

The enzyme catalyses Endonucleolytic cleavage of RNA, removing extra 3' nucleotides from tRNA precursor, generating 3' termini of tRNAs. A 3'-hydroxy group is left at the tRNA terminus and a 5'-phosphoryl group is left at the trailer molecule.. Zinc phosphodiesterase, which displays some tRNA 3'-processing endonuclease activity. Probably involved in tRNA maturation, by removing a 3'-trailer from precursor tRNA. The polypeptide is Ribonuclease Z (Prochlorococcus marinus (strain MIT 9312)).